The sequence spans 791 residues: Disintegrin and metalloproteinase domain-containing protein 1a (791 aa).

A signal peptide spans 1–65 (MSVAAAGRGF…LLIFLPSTFC (65 aa)). An N-linked (GlcNAc...) asparagine glycan is attached at Asn-72. The segment at 201–220 (CSVTPKDSPGDTSHPPRSRK) is disordered. The Peptidase M12B domain maps to 235–429 (KYVEMFVVVN…HRGACLLDEP (195 aa)). Asn-256 is a glycosylation site (N-linked (GlcNAc...) asparagine). Intrachain disulfides connect Cys-345–Cys-424, Cys-385–Cys-408, and Cys-387–Cys-393. His-370 is a Zn(2+) binding site. Glu-371 is an active-site residue. Residues His-374 and His-380 each coordinate Zn(2+). N-linked (GlcNAc...) asparagine glycosylation is found at Asn-407 and Asn-484. The 85-residue stretch at 438 to 522 (AANCGNGVVE…ECPANSYMQD (85 aa)) folds into the Disintegrin domain. Cys-494 and Cys-514 are oxidised to a cystine. N-linked (GlcNAc...) asparagine glycosylation is present at Asn-630. In terms of domain architecture, EGF-like spans 663–697 (LQYNCEPQEMCHGNGVCNNFKHCHCDAGFAPPDCS). Disulfide bonds link Cys-667–Cys-679, Cys-673–Cys-685, and Cys-687–Cys-696. The chain crosses the membrane as a helical span at residues 741–761 (VMVLVVPIFLVVLLCCLMLIA). The Cytoplasmic segment spans residues 762-791 (YLWSEVQEVVSPPSSSESSSSSSWSDSDSQ). A disordered region spans residues 772-791 (SPPSSSESSSSSSWSDSDSQ).

Heterodimer with ADAM2/fertilin subunit beta. As to expression, testis.

Its subcellular location is the membrane. May be involved in sperm-egg fusion. The polypeptide is Disintegrin and metalloproteinase domain-containing protein 1a (Adam1a) (Mus musculus (Mouse)).